The primary structure comprises 640 residues: Threonine--tRNA ligase (640 aa).

Positions D224 to P525 are catalytic. The Zn(2+) site is built by C323, H374, and H502.

It belongs to the class-II aminoacyl-tRNA synthetase family. As to quaternary structure, homodimer. Zn(2+) serves as cofactor.

It localises to the cytoplasm. The catalysed reaction is tRNA(Thr) + L-threonine + ATP = L-threonyl-tRNA(Thr) + AMP + diphosphate + H(+). In terms of biological role, catalyzes the attachment of threonine to tRNA(Thr) in a two-step reaction: L-threonine is first activated by ATP to form Thr-AMP and then transferred to the acceptor end of tRNA(Thr). Also edits incorrectly charged L-seryl-tRNA(Thr). The protein is Threonine--tRNA ligase of Tropheryma whipplei (strain TW08/27) (Whipple's bacillus).